The sequence spans 303 residues: Eukaryotic translation initiation factor 3 subunit F (303 aa).

A compositionally biased stretch (polar residues) spans 1 to 10 (MSLDTSSSAI). The interval 1-25 (MSLDTSSSAIHLQLPPTSSSLRPPS) is disordered. Residues 12–25 (LQLPPTSSSLRPPS) show a composition bias toward low complexity. In terms of domain architecture, MPN spans 27-165 (ITVHPSVIAQ…VKGWVSQPLG (139 aa)).

It belongs to the eIF-3 subunit F family. As to quaternary structure, component of the eukaryotic translation initiation factor 3 (eIF-3) complex.

It is found in the cytoplasm. In terms of biological role, component of the eukaryotic translation initiation factor 3 (eIF-3) complex, which is involved in protein synthesis of a specialized repertoire of mRNAs and, together with other initiation factors, stimulates binding of mRNA and methionyl-tRNAi to the 40S ribosome. The eIF-3 complex specifically targets and initiates translation of a subset of mRNAs involved in cell proliferation. The polypeptide is Eukaryotic translation initiation factor 3 subunit F (Cryptococcus neoformans var. neoformans serotype D (strain B-3501A) (Filobasidiella neoformans)).